Consider the following 658-residue polypeptide: DNA ligase (658 aa).

NAD(+) is bound by residues 32–36 (DAVYD) and 81–82 (SL). The active-site N6-AMP-lysine intermediate is the K112. NAD(+)-binding residues include R133, E167, and K306. Positions 400, 403, 416, and 421 each coordinate Zn(2+). The BRCT domain maps to 577-658 (ESSSVFNNKT…LKRLKKLDQN (82 aa)).

This sequence belongs to the NAD-dependent DNA ligase family. LigA subfamily. Requires Mg(2+) as cofactor. The cofactor is Mn(2+).

It carries out the reaction NAD(+) + (deoxyribonucleotide)n-3'-hydroxyl + 5'-phospho-(deoxyribonucleotide)m = (deoxyribonucleotide)n+m + AMP + beta-nicotinamide D-nucleotide.. Functionally, DNA ligase that catalyzes the formation of phosphodiester linkages between 5'-phosphoryl and 3'-hydroxyl groups in double-stranded DNA using NAD as a coenzyme and as the energy source for the reaction. It is essential for DNA replication and repair of damaged DNA. This is DNA ligase from Helicobacter pylori (strain G27).